Reading from the N-terminus, the 279-residue chain is Urease accessory protein UreD (279 aa).

Belongs to the UreD family. As to quaternary structure, ureD, UreF and UreG form a complex that acts as a GTP-hydrolysis-dependent molecular chaperone, activating the urease apoprotein by helping to assemble the nickel containing metallocenter of UreC. The UreE protein probably delivers the nickel.

The protein localises to the cytoplasm. Its function is as follows. Required for maturation of urease via the functional incorporation of the urease nickel metallocenter. This is Urease accessory protein UreD from Nostoc sp. (strain PCC 7120 / SAG 25.82 / UTEX 2576).